The sequence spans 892 residues: MDHYDSQQTNDYMQPEEDWDRDLLLDPAWEKQQRKTFTAWCNSHLRKAGTQIENIEEDFRDGLKLMLLLEVISGERLAKPERGKMRVHKISNVNKALDFIASKGVKLVSIGAEEIVDGNVKMTLGMIWTIILRFAIQDISVEETSAKEGLLLWCQRKTAPYKNVNIQNFHISWKDGLGFCALIHRHRPELIDYGKLRKDDPLTNLNTAFDVAERYLDIPKMLDAEDIVGTARPDEKAIMTYVSSFYHAFSGAQKAETAANRICKVLAVNQENEQLMEDYEKLASDLLEWIRRTIPWLENRVPENTMQAMQQKLEDFRDYRRLHKPPKVQEKCQLEINFNTLQTKLRLSNRPAFMPSEGRMVSDINNAWGCLEQAEKGYEEWLLNEIRRLERLDHLAEKFRQKASIHEAWTDGKEAMLRQKDYETATLSEIKALLKKHEAFESDLAAHQDRVEQIAAIAQELNELDYYDSPSVNARCQKICDQWDNLGALTQKRREALERTEKLLETIDQLYLEYAKRAAPFNNWMEGAMEDLQDTFIVHTIEEIQGLTTAHEQFKATLPDADKERLAILGIHNEVSKIVQTYHVNMAGTNPYTTITPQEINGKWDHVRQLVPRRDQALTEEHSRQQHNERLRKQFGAQANVIGPWIQTKMEEIGRISIEMHGTLEDQLSHLRQYEKSIVNYKPKIDQLEGDHQLIQEALIFDNKHTNYTMEHIRVGWEQLLTTIARTINEVENQILTRDAKGISQEQMNEFRASFNHFDRDHSGTLGPEEFKACLISLGYDIGNDPQGEAEFARIMSIVDPNRLGVVTFQAFIDFMSRETADTDTADQVMASFKILAGDKNYITGDELRRELPPDQAEYCIARMAPYAGPDSVPGALDYMSFSTALYGESDL.

The residue at position 1 (M1) is an N-acetylmethionine. An actin-binding region spans residues M1–H247. A Phosphoserine modification is found at S6. Phosphotyrosine; by FAK1 is present on Y12. 2 consecutive Calponin-homology (CH) domains span residues K31 to A135 and T144 to S250. N6-acetyllysine occurs at positions 95 and 195. 4 Spectrin repeats span residues Q274–N384, H394–R499, Q509–E620, and R630–N733. An interaction with DDN region spans residues Q274–N733. S471 bears the Phosphoserine mark. K676 carries the N6-acetyllysine modification. Phosphoserine is present on S677. EF-hand domains lie at E746–D781 and Q787–D822. Ca(2+) contacts are provided by D759, D761, S763, T765, and E770. Phosphoserine is present on S890.

Belongs to the alpha-actinin family. In terms of assembly, homodimer; antiparallel. Interacts with MYOZ2, TTID and LPP. Interacts with DDN. Interacts with PSD. Interacts with MICALL2. Interacts with DNM2 and CTTN. Interacts with PDLIM1. Interacts with PDLIM2. Interacts with PDLIM4 (via PDZ domain). Interacts with IGSF8.

Its subcellular location is the cytoplasm. The protein resides in the cytoskeleton. It localises to the myofibril. It is found in the sarcomere. The protein localises to the z line. Its subcellular location is the cell membrane. The protein resides in the cell junction. It localises to the cell projection. It is found in the ruffle. F-actin cross-linking protein which is thought to anchor actin to a variety of intracellular structures. Association with IGSF8 regulates the immune synapse formation and is required for efficient T-cell activation. This chain is Alpha-actinin-1 (Actn1), found in Rattus norvegicus (Rat).